A 494-amino-acid polypeptide reads, in one-letter code: 3-octaprenyl-4-hydroxybenzoate carboxy-lyase (494 aa).

N172 contributes to the Mn(2+) binding site. Prenylated FMN-binding positions include 175–177 (IYR), 189–191 (RWL), and 194–195 (RG). E238 provides a ligand contact to Mn(2+). D294 serves as the catalytic Proton donor.

This sequence belongs to the UbiD family. As to quaternary structure, homohexamer. It depends on prenylated FMN as a cofactor. The cofactor is Mn(2+).

It is found in the cell membrane. It catalyses the reaction a 4-hydroxy-3-(all-trans-polyprenyl)benzoate + H(+) = a 2-(all-trans-polyprenyl)phenol + CO2. It functions in the pathway cofactor biosynthesis; ubiquinone biosynthesis. Functionally, catalyzes the decarboxylation of 3-octaprenyl-4-hydroxy benzoate to 2-octaprenylphenol, an intermediate step in ubiquinone biosynthesis. The chain is 3-octaprenyl-4-hydroxybenzoate carboxy-lyase from Albidiferax ferrireducens (strain ATCC BAA-621 / DSM 15236 / T118) (Rhodoferax ferrireducens).